Reading from the N-terminus, the 126-residue chain is MPNQYEIYKCIHCGNIVEVLHAGGGDLVCCGEPMKLMKEGTSDGAKEKHVPVIEKTANGYKVTVGSVAHPMEEKHWIEWIELVADGVSYKKFLKPGDAPEAEFCIKADKVVAREYCNLHGHWKAEA.

The Fe cation site is built by Cys10, Cys13, Cys29, Cys30, His49, His69, His75, Cys116, and His119.

This sequence belongs to the desulfoferrodoxin family. In terms of assembly, homodimer. It depends on Fe(3+) as a cofactor. Cu(2+) is required as a cofactor.

The enzyme catalyses reduced [rubredoxin] + superoxide + 2 H(+) = oxidized [rubredoxin] + H2O2. Its function is as follows. Catalyzes the one-electron reduction of superoxide anion radical to hydrogen peroxide at a nonheme ferrous iron center. Plays a fundamental role in case of oxidative stress via its superoxide detoxification activity. The sequence is that of Desulfoferrodoxin (dfx) from Nitratidesulfovibrio vulgaris (strain ATCC 29579 / DSM 644 / CCUG 34227 / NCIMB 8303 / VKM B-1760 / Hildenborough) (Desulfovibrio vulgaris).